We begin with the raw amino-acid sequence, 176 residues long: ATP-dependent protease subunit HslV (176 aa).

The active site involves Thr-5. Na(+) contacts are provided by Gly-161, Cys-164, and Thr-167.

It belongs to the peptidase T1B family. HslV subfamily. A double ring-shaped homohexamer of HslV is capped on each side by a ring-shaped HslU homohexamer. The assembly of the HslU/HslV complex is dependent on binding of ATP.

The protein localises to the cytoplasm. The catalysed reaction is ATP-dependent cleavage of peptide bonds with broad specificity.. Its activity is regulated as follows. Allosterically activated by HslU binding. Protease subunit of a proteasome-like degradation complex believed to be a general protein degrading machinery. The sequence is that of ATP-dependent protease subunit HslV from Sulfurovum sp. (strain NBC37-1).